Consider the following 873-residue polypeptide: Probable inorganic carbon transporter subunit DabA (873 aa).

Residues Cys-393, Asp-395, His-575, and Cys-590 each coordinate Zn(2+).

Belongs to the inorganic carbon transporter (TC 9.A.2) DabA family. As to quaternary structure, forms a complex with DabB. The cofactor is Zn(2+).

The protein localises to the cell membrane. Part of an energy-coupled inorganic carbon pump. The sequence is that of Probable inorganic carbon transporter subunit DabA from Bacillus licheniformis (strain ATCC 14580 / DSM 13 / JCM 2505 / CCUG 7422 / NBRC 12200 / NCIMB 9375 / NCTC 10341 / NRRL NRS-1264 / Gibson 46).